The primary structure comprises 318 residues: Methionyl-tRNA formyltransferase (318 aa).

112–115 (SILP) serves as a coordination point for (6S)-5,6,7,8-tetrahydrofolate.

The protein belongs to the Fmt family.

It catalyses the reaction L-methionyl-tRNA(fMet) + (6R)-10-formyltetrahydrofolate = N-formyl-L-methionyl-tRNA(fMet) + (6S)-5,6,7,8-tetrahydrofolate + H(+). Attaches a formyl group to the free amino group of methionyl-tRNA(fMet). The formyl group appears to play a dual role in the initiator identity of N-formylmethionyl-tRNA by promoting its recognition by IF2 and preventing the misappropriation of this tRNA by the elongation apparatus. The protein is Methionyl-tRNA formyltransferase of Shewanella sp. (strain W3-18-1).